The primary structure comprises 304 residues: ATP synthase gamma chain (304 aa).

It belongs to the ATPase gamma chain family. As to quaternary structure, F-type ATPases have 2 components, CF(1) - the catalytic core - and CF(0) - the membrane proton channel. CF(1) has five subunits: alpha(3), beta(3), gamma(1), delta(1), epsilon(1). CF(0) has three main subunits: a, b and c.

The protein localises to the cell membrane. Produces ATP from ADP in the presence of a proton gradient across the membrane. The gamma chain is believed to be important in regulating ATPase activity and the flow of protons through the CF(0) complex. This Mycobacterium marinum (strain ATCC BAA-535 / M) protein is ATP synthase gamma chain.